We begin with the raw amino-acid sequence, 115 residues long: Class I hydrophobin C (115 aa).

Residues 1–19 (MFSRVLVAALVALPVLVSA) form the signal peptide. Intrachain disulfides connect cysteine 36–cysteine 93, cysteine 43–cysteine 87, cysteine 44–cysteine 74, and cysteine 94–cysteine 108.

This sequence belongs to the fungal hydrophobin family. Self-assembles to form functional amyloid fibrils called rodlets. Self-assembly into fibrillar rodlets occurs spontaneously at hydrophobic:hydrophilic interfaces and the rodlets further associate laterally to form amphipathic monolayers.

The protein localises to the secreted. The protein resides in the cell wall. Functionally, aerial growth, conidiation, and dispersal of filamentous fungi in the environment rely upon a capability of their secreting small amphipathic proteins called hydrophobins (HPBs) with low sequence identity. Class I can self-assemble into an outermost layer of rodlet bundles on aerial cell surfaces, conferring cellular hydrophobicity that supports fungal growth, development and dispersal; whereas Class II form highly ordered films at water-air interfaces through intermolecular interactions but contribute nothing to the rodlet structure. This Agaricus bisporus (White button mushroom) protein is Class I hydrophobin C.